Here is a 132-residue protein sequence, read N- to C-terminus: Small ribosomal subunit protein uS8 (132 aa).

This sequence belongs to the universal ribosomal protein uS8 family. As to quaternary structure, part of the 30S ribosomal subunit. Contacts proteins S5 and S12.

In terms of biological role, one of the primary rRNA binding proteins, it binds directly to 16S rRNA central domain where it helps coordinate assembly of the platform of the 30S subunit. The sequence is that of Small ribosomal subunit protein uS8 from Rickettsia conorii (strain ATCC VR-613 / Malish 7).